The following is a 409-amino-acid chain: Argininosuccinate synthase (409 aa).

Residues 11-19 (AYSGGLDTS) and Ala38 each bind ATP. L-citrulline is bound by residues Tyr91 and Ser96. Residue Gly121 participates in ATP binding. Residues Thr123, Asn127, and Asp128 each contribute to the L-aspartate site. Asn127 is a binding site for L-citrulline. 5 residues coordinate L-citrulline: Arg131, Ser182, Ser191, Glu267, and Tyr279.

It belongs to the argininosuccinate synthase family. Type 1 subfamily. In terms of assembly, homotetramer.

It localises to the cytoplasm. The enzyme catalyses L-citrulline + L-aspartate + ATP = 2-(N(omega)-L-arginino)succinate + AMP + diphosphate + H(+). Its pathway is amino-acid biosynthesis; L-arginine biosynthesis; L-arginine from L-ornithine and carbamoyl phosphate: step 2/3. The sequence is that of Argininosuccinate synthase from Nitrobacter winogradskyi (strain ATCC 25391 / DSM 10237 / CIP 104748 / NCIMB 11846 / Nb-255).